Consider the following 1123-residue polypeptide: Translation initiation factor IF-2 (1123 aa).

2 disordered regions span residues 52–452 (LLKA…KVHI) and 480–512 (LARP…RQRQ). Low complexity-rich tracts occupy residues 54 to 73 (KAGS…PGKA), 94 to 113 (KPAA…AKSP), and 121 to 133 (AAPS…KASA). Over residues 170-187 (PPSPPARPVPQQPSPPSA) the composition is skewed to pro residues. Residues 193 to 206 (APIRRAAPNDAPRP) are compositionally biased toward low complexity. Pro residues-rich tracts occupy residues 207–217 (ANAPPSRPQPK) and 258–268 (SPRPAVSPRPS). A compositionally biased stretch (low complexity) spans 285–304 (RPGAPTRPGTGAGRPSRPGG). Residues 320–339 (GNRGEGGRPPGGARPAGGGN) show a composition bias toward gly residues. The span at 388 to 403 (ATPPVSRPTATPPSPA) shows a compositional bias: pro residues. The span at 412-422 (FRPGAGPGGQR) shows a compositional bias: gly residues. Residues 425–439 (GRPDWDDSAKLDALR) show a composition bias toward basic and acidic residues. Residues 486–499 (PKSQQKAAPKPVAA) show a composition bias toward low complexity. Positions 500 to 512 (MRKRRKETTRQRQ) are enriched in basic residues. The tr-type G domain occupies 615 to 787 (RRPPVVTVMG…LLLVTEVEDL (173 aa)). The G1 stretch occupies residues 624–631 (GHVDHGKT). 624-631 (GHVDHGKT) contacts GTP. The segment at 649-653 (GITQH) is G2. Residues 674–677 (DTPG) are G3. GTP contacts are provided by residues 674-678 (DTPGH) and 728-731 (NKID). Residues 728–731 (NKID) are G4. A G5 region spans residues 764 to 766 (SAI).

This sequence belongs to the TRAFAC class translation factor GTPase superfamily. Classic translation factor GTPase family. IF-2 subfamily.

The protein resides in the cytoplasm. In terms of biological role, one of the essential components for the initiation of protein synthesis. Protects formylmethionyl-tRNA from spontaneous hydrolysis and promotes its binding to the 30S ribosomal subunits. Also involved in the hydrolysis of GTP during the formation of the 70S ribosomal complex. The protein is Translation initiation factor IF-2 of Synechococcus sp. (strain WH7803).